A 400-amino-acid polypeptide reads, in one-letter code: CCA-adding enzyme (400 aa).

ATP is bound by residues G28 and R31. The CTP site is built by G28 and R31. D41 and D43 together coordinate Mg(2+). ATP contacts are provided by R112, D155, R158, R161, and R164. 5 residues coordinate CTP: R112, D155, R158, R161, and R164.

The protein belongs to the tRNA nucleotidyltransferase/poly(A) polymerase family. Bacterial CCA-adding enzyme type 3 subfamily. As to quaternary structure, homodimer. Mg(2+) serves as cofactor.

It carries out the reaction a tRNA precursor + 2 CTP + ATP = a tRNA with a 3' CCA end + 3 diphosphate. It catalyses the reaction a tRNA with a 3' CCA end + 2 CTP + ATP = a tRNA with a 3' CCACCA end + 3 diphosphate. Its function is as follows. Catalyzes the addition and repair of the essential 3'-terminal CCA sequence in tRNAs without using a nucleic acid template. Adds these three nucleotides in the order of C, C, and A to the tRNA nucleotide-73, using CTP and ATP as substrates and producing inorganic pyrophosphate. tRNA 3'-terminal CCA addition is required both for tRNA processing and repair. Also involved in tRNA surveillance by mediating tandem CCA addition to generate a CCACCA at the 3' terminus of unstable tRNAs. While stable tRNAs receive only 3'-terminal CCA, unstable tRNAs are marked with CCACCA and rapidly degraded. The sequence is that of CCA-adding enzyme from Staphylococcus aureus (strain MSSA476).